Reading from the N-terminus, the 51-residue chain is Small ribosomal subunit protein eS31 (51 aa).

Zn(2+) is bound by residues Cys-21, Cys-24, Cys-39, and Cys-42. The C4-type zinc finger occupies 21 to 42 (CPRCGPGVFLAEHEDRFSCGRC).

The protein belongs to the eukaryotic ribosomal protein eS31 family. In terms of assembly, part of the 30S ribosomal subunit. Zn(2+) serves as cofactor.

This Picrophilus torridus (strain ATCC 700027 / DSM 9790 / JCM 10055 / NBRC 100828 / KAW 2/3) protein is Small ribosomal subunit protein eS31.